The primary structure comprises 295 residues: Aspartate carbamoyltransferase catalytic subunit (295 aa).

The carbamoyl phosphate site is built by R49 and T50. K77 provides a ligand contact to L-aspartate. Carbamoyl phosphate-binding residues include R99, H127, and Q130. R161 and R212 together coordinate L-aspartate. 2 residues coordinate carbamoyl phosphate: G251 and P252.

This sequence belongs to the aspartate/ornithine carbamoyltransferase superfamily. ATCase family. In terms of assembly, heterododecamer (2C3:3R2) of six catalytic PyrB chains organized as two trimers (C3), and six regulatory PyrI chains organized as three dimers (R2).

The enzyme catalyses carbamoyl phosphate + L-aspartate = N-carbamoyl-L-aspartate + phosphate + H(+). The protein operates within pyrimidine metabolism; UMP biosynthesis via de novo pathway; (S)-dihydroorotate from bicarbonate: step 2/3. In terms of biological role, catalyzes the condensation of carbamoyl phosphate and aspartate to form carbamoyl aspartate and inorganic phosphate, the committed step in the de novo pyrimidine nucleotide biosynthesis pathway. This is Aspartate carbamoyltransferase catalytic subunit from Campylobacter jejuni subsp. doylei (strain ATCC BAA-1458 / RM4099 / 269.97).